A 501-amino-acid chain; its full sequence is O-phosphoseryl-tRNA(Sec) selenium transferase (501 aa).

The segment at 1–44 (MNRESFAAGERLVSPAYVRQGCEARRSHEHLIRLLLEKGKCPEN) is tetramerization. The residue at position 14 (serine 14) is a Phosphoserine. Arginine 75 lines the pyridoxal 5'-phosphate pocket. Residues 96–106 (GRSGDISAVQP) form a phosphate loop (P-loop) region. Substrate contacts are provided by arginine 97, serine 98, and glutamine 105. Arginine 271 provides a ligand contact to tRNA. Lysine 284 carries the post-translational modification N6-(pyridoxal phosphate)lysine. Arginine 313 contributes to the substrate binding site. Positions 398 and 463 each coordinate tRNA.

It belongs to the SepSecS family. Homotetramer formed by a catalytic dimer and a non-catalytic dimer serving as a binding platform that orients tRNASec for catalysis. Each tetramer binds the CCA ends of two tRNAs which point to the active sites of the catalytic dimer. Pyridoxal 5'-phosphate serves as cofactor.

Its subcellular location is the cytoplasm. It catalyses the reaction O-phospho-L-seryl-tRNA(Sec) + selenophosphate + H2O = L-selenocysteinyl-tRNA(Sec) + 2 phosphate. It functions in the pathway aminoacyl-tRNA biosynthesis; selenocysteinyl-tRNA(Sec) biosynthesis; selenocysteinyl-tRNA(Sec) from L-seryl-tRNA(Sec) (archaeal/eukaryal route): step 2/2. Its function is as follows. Converts O-phosphoseryl-tRNA(Sec) to selenocysteinyl-tRNA(Sec) required for selenoprotein biosynthesis. The polypeptide is O-phosphoseryl-tRNA(Sec) selenium transferase (SEPSECS) (Pongo abelii (Sumatran orangutan)).